Consider the following 204-residue polypeptide: Large ribosomal subunit protein uL3 (204 aa).

It belongs to the universal ribosomal protein uL3 family. Part of the 50S ribosomal subunit. Forms a cluster with proteins L14 and L19.

Its function is as follows. One of the primary rRNA binding proteins, it binds directly near the 3'-end of the 23S rRNA, where it nucleates assembly of the 50S subunit. The sequence is that of Large ribosomal subunit protein uL3 from Azobacteroides pseudotrichonymphae genomovar. CFP2.